The sequence spans 75 residues: Supwaprin-a (75 aa).

Positions 1-24 (MSSGGLLLLLGFLTLWAELTPVSG) are cleaved as a signal peptide. The region spanning 27 to 72 (RPKKPGLCPPRPQKPPCVRECKNDWSCPGEQKCCRYGCIFECRDPI) is the WAP domain. 4 disulfide bridges follow: C34-C60, C43-C64, C47-C59, and C53-C68.

It belongs to the venom waprin family. As to expression, expressed by the venom gland.

Its subcellular location is the secreted. Damages membranes of susceptible bacteria. Has no hemolytic activity. Not toxic to mice. Does not inhibit the proteinases elastase and cathepsin G. The protein is Supwaprin-a of Austrelaps superbus (Lowland copperhead snake).